We begin with the raw amino-acid sequence, 118 residues long: Ribulose bisphosphate carboxylase small subunit (118 aa).

This sequence belongs to the RuBisCO small chain family. In terms of assembly, heterohexadecamer of 8 large and 8 small subunits.

It localises to the carboxysome. Its function is as follows. RuBisCO catalyzes two reactions: the carboxylation of D-ribulose 1,5-bisphosphate, the primary event in carbon dioxide fixation, as well as the oxidative fragmentation of the pentose substrate in the photorespiration process. Both reactions occur simultaneously and in competition at the same active site. Although the small subunit is not catalytic it is essential for maximal activity. This chain is Ribulose bisphosphate carboxylase small subunit, found in Thermosynechococcus vestitus (strain NIES-2133 / IAM M-273 / BP-1).